A 553-amino-acid chain; its full sequence is MANVIKTVLTYQLDGSNRDFNIPFEYLARKFVVVTLIGVDRKVLTINTDYRFATRTTISLTKAWGPADGYTTIELRRVTSTTDRLVDFTDGSILRAYDLNVAQIQTMHVAEEARDLTTDTIGVNNDGHLDARGRRIVNLANAVDDRDAVPFGQLKTMNQNSWQARNEALQFRNEAETFRNQAEGFKNESSTNATNTKQWRDETKGFRDEAKRFKNTAGQYATSAGNSASAAHQSEVNAENSATASANSAHLAEQQADRAEREADKLENYNGLAGAIDKVDGTNVYWKGNIHANGRLYMTTNGFDCGQYQQFFGGVTNRYSVMEWGDENGWLMYVQRREWTTAIGGNIQLVVNGQIITQGGAMTGQLKLQNGHVLQLESASDKAHYILSKDGNRNNWYIGRGSDNNNDCTFHSYVHGTTLTLKQDYAVVNKHFHVGQAVVATDGNIQGTKWGGKWLDAYLRDSFVAKSKAWTQVWSGSAGGGVSVTVSQDLRFRNIWIKCANNSWNFFRTGPDGIYFIASDGGWLRFQIHSNGLGFKNIADSRSVPNAIMVENE.

2 disordered regions span residues 180-204 (NQAE…DETK) and 224-261 (AGNS…RAER). Residues 187–197 (NESSTNATNTK) are compositionally biased toward polar residues. A compositionally biased stretch (low complexity) spans 234 to 254 (SEVNAENSATASANSAHLAEQ).

The protein belongs to the Teseptimavirus fiber family. In terms of assembly, homotrimer. Interacts with tail components gp11 and gp12.

The protein localises to the virion. Its function is as follows. Structural component of the short non-contractile tail. The tail comprises six fibers made of gp17 trimers, 2 nm in diameter and 32 nm in length. May attach to host lipopolysaccharides (LPS) to mediate primary attachment to the host cell. In Escherichia phage T7 (Bacteriophage T7), this protein is Tail fiber protein.